A 69-amino-acid polypeptide reads, in one-letter code: Pleurain-A4 (69 aa).

A signal peptide spans 1–22 (MFTLKKTLLLLFFLGTISISLC). Residues 23-43 (KQERDADEDDGRKMTEEEVKR) constitute a propeptide that is removed on maturation. A disulfide bridge connects residues Cys63 and Cys69.

The protein belongs to the frog skin active peptide (FSAP) family. Pleurain subfamily. Expressed by the skin glands.

It is found in the secreted. Its function is as follows. Antimicrobial peptide. Has activity against Gram-positive and -negative bacteria, and fungi. Has little hemolytic activity on red blood cells. The chain is Pleurain-A4 from Nidirana pleuraden (Yunnan pond frog).